Here is a 732-residue protein sequence, read N- to C-terminus: 1,4-alpha-glucan branching enzyme GlgB (732 aa).

Asp-415 functions as the Nucleophile in the catalytic mechanism. Catalysis depends on Glu-468, which acts as the Proton donor.

This sequence belongs to the glycosyl hydrolase 13 family. GlgB subfamily. In terms of assembly, monomer.

It catalyses the reaction Transfers a segment of a (1-&gt;4)-alpha-D-glucan chain to a primary hydroxy group in a similar glucan chain.. It functions in the pathway glycan biosynthesis; glycogen biosynthesis. Catalyzes the formation of the alpha-1,6-glucosidic linkages in glycogen by scission of a 1,4-alpha-linked oligosaccharide from growing alpha-1,4-glucan chains and the subsequent attachment of the oligosaccharide to the alpha-1,6 position. The chain is 1,4-alpha-glucan branching enzyme GlgB from Nitrosomonas eutropha (strain DSM 101675 / C91 / Nm57).